Reading from the N-terminus, the 311-residue chain is Urease accessory protein UreD 3 (311 aa).

This sequence belongs to the UreD family. UreD, UreF and UreG form a complex that acts as a GTP-hydrolysis-dependent molecular chaperone, activating the urease apoprotein by helping to assemble the nickel containing metallocenter of UreC. The UreE protein probably delivers the nickel.

Its subcellular location is the cytoplasm. Its function is as follows. Required for maturation of urease via the functional incorporation of the urease nickel metallocenter. The polypeptide is Urease accessory protein UreD 3 (Methylorubrum populi (strain ATCC BAA-705 / NCIMB 13946 / BJ001) (Methylobacterium populi)).